Reading from the N-terminus, the 551-residue chain is Calnexin homolog (551 aa).

The signal sequence occupies residues 1–26 (MVDRKEIPLAMGLLAVLLFFVASSSS). The Lumenal segment spans residues 27–480 (FHLVRASDEV…EKGEKQPNLT (454 aa)). The Ca(2+) site is built by serine 44 and aspartate 75. Cysteine 118 and cysteine 153 are oxidised to a cystine. Residues tyrosine 122 and lysine 124 each coordinate an alpha-D-glucoside. Asparagine 140 carries an N-linked (GlcNAc...) asparagine glycan. An alpha-D-glucoside contacts are provided by tyrosine 144 and aspartate 151. Positions 226–330 (ALIPSKTIPD…CGEWKRPTKS (105 aa)) are disordered. A p domain (Extended arm) region spans residues 233–364 (IPDPDDKKPE…QEIPNPEYFE (132 aa)). 2 stretches are compositionally biased toward basic and acidic residues: residues 234–269 (PDPDDKKPEDWDERAKIPDPEAVKPEDWDEDAPREI) and 276–295 (KPEPWLDHEPEVDDPEAKPE). Tandem repeats lie at residues 235–246 (DPDDKKPEDWDE), 252–263 (DPEAVKPEDWDE), 271–282 (DEEAEKPEPWLD), 289–299 (DPEAKPEDWDD), and 303–313 (GEWEAPKIENP). 2 4 X approximate repeats regions span residues 235-299 (DPDD…DWDD) and 303-360 (GEWE…IPNP). Positions 296–305 (DWDDEEDGEW) are enriched in acidic residues. The cysteines at positions 315 and 321 are disulfide-linked. 3 tandem repeats follow at residues 322-332 (GEWKRPTKSNP), 336-346 (GKWSAPYIDNP), and 350-360 (GIWKPQEIPNP). Glutamate 379 serves as a coordination point for an alpha-D-glucoside. A Ca(2+)-binding site is contributed by aspartate 390. Residue asparagine 478 is glycosylated (N-linked (GlcNAc...) asparagine). A helical transmembrane segment spans residues 481–501 (IGIIVSVVIVFVSIFFRLIFG). Residues 502–551 (GKKPANVEANVEKKKTNTETTSKQDGGEKEDNKEKEETANPPRRRPKRDN) lie on the Cytoplasmic side of the membrane. A disordered region spans residues 510–551 (ANVEKKKTNTETTSKQDGGEKEDNKEKEETANPPRRRPKRDN). A compositionally biased stretch (basic and acidic residues) spans 526–539 (DGGEKEDNKEKEET).

This sequence belongs to the calreticulin family. As to expression, in vegetative and flowering tissues.

Its subcellular location is the endoplasmic reticulum membrane. In terms of biological role, calcium-binding protein that interacts with newly synthesized monoglucosylated glycoproteins in the endoplasmic reticulum. It may act in assisting protein assembly and/or in the retention within the ER of unassembled protein subunits. It seems to play a major role in the quality control apparatus of the ER by the retention of incorrectly folded proteins. The sequence is that of Calnexin homolog from Pisum sativum (Garden pea).